Reading from the N-terminus, the 362-residue chain is Chorismate synthase (362 aa).

Arginine 47 is an NADP(+) binding site. FMN contacts are provided by residues 124 to 126 (RAS), glycine 286, 301 to 305 (KPTAT), and arginine 327.

Belongs to the chorismate synthase family. In terms of assembly, homotetramer. It depends on FMNH2 as a cofactor.

The enzyme catalyses 5-O-(1-carboxyvinyl)-3-phosphoshikimate = chorismate + phosphate. It participates in metabolic intermediate biosynthesis; chorismate biosynthesis; chorismate from D-erythrose 4-phosphate and phosphoenolpyruvate: step 7/7. In terms of biological role, catalyzes the anti-1,4-elimination of the C-3 phosphate and the C-6 proR hydrogen from 5-enolpyruvylshikimate-3-phosphate (EPSP) to yield chorismate, which is the branch point compound that serves as the starting substrate for the three terminal pathways of aromatic amino acid biosynthesis. This reaction introduces a second double bond into the aromatic ring system. In Prochlorococcus marinus (strain SARG / CCMP1375 / SS120), this protein is Chorismate synthase.